Here is a 319-residue protein sequence, read N- to C-terminus: Small ribosomal subunit protein mS35 (319 aa).

Residues 1–30 (MKVPLGLWKVSRGNLWSTQKRVLTMSRCLN) constitute a mitochondrion transit peptide.

It belongs to the mitochondrion-specific ribosomal protein mS35 family. In terms of assembly, component of the mitochondrial small ribosomal subunit (mt-SSU). Mature yeast 74S mitochondrial ribosomes consist of a small (37S) and a large (54S) subunit. The 37S small subunit contains a 15S ribosomal RNA (15S mt-rRNA) and 34 different proteins. The 54S large subunit contains a 21S rRNA (21S mt-rRNA) and 46 different proteins.

Its subcellular location is the mitochondrion. Component of the mitochondrial ribosome (mitoribosome), a dedicated translation machinery responsible for the synthesis of mitochondrial genome-encoded proteins, including at least some of the essential transmembrane subunits of the mitochondrial respiratory chain. The mitoribosomes are attached to the mitochondrial inner membrane and translation products are cotranslationally integrated into the membrane. The protein is Small ribosomal subunit protein mS35 (RSM24) of Saccharomyces cerevisiae (strain ATCC 204508 / S288c) (Baker's yeast).